The following is a 356-amino-acid chain: Holliday junction branch migration complex subunit RuvB (356 aa).

Positions 4–190 are large ATPase domain (RuvB-L); the sequence is TDKLAAERII…FGIVARLEFY (187 aa). Residues Leu-29, Arg-30, Gly-71, Lys-74, Thr-75, Thr-76, 137-139, Arg-180, Tyr-190, and Arg-227 each bind ATP; that span reads EDY. Residue Thr-75 participates in Mg(2+) binding. A small ATPAse domain (RuvB-S) region spans residues 191–261; sequence DAEQLSRIVR…VADAALAMLD (71 aa). A head domain (RuvB-H) region spans residues 264–356; the sequence is PVGFDLMDRK…NLWDTPDAER (93 aa). 3 residues coordinate DNA: Arg-300, Arg-319, and Arg-324.

This sequence belongs to the RuvB family. In terms of assembly, homohexamer. Forms an RuvA(8)-RuvB(12)-Holliday junction (HJ) complex. HJ DNA is sandwiched between 2 RuvA tetramers; dsDNA enters through RuvA and exits via RuvB. An RuvB hexamer assembles on each DNA strand where it exits the tetramer. Each RuvB hexamer is contacted by two RuvA subunits (via domain III) on 2 adjacent RuvB subunits; this complex drives branch migration. In the full resolvosome a probable DNA-RuvA(4)-RuvB(12)-RuvC(2) complex forms which resolves the HJ.

It localises to the cytoplasm. The catalysed reaction is ATP + H2O = ADP + phosphate + H(+). Functionally, the RuvA-RuvB-RuvC complex processes Holliday junction (HJ) DNA during genetic recombination and DNA repair, while the RuvA-RuvB complex plays an important role in the rescue of blocked DNA replication forks via replication fork reversal (RFR). RuvA specifically binds to HJ cruciform DNA, conferring on it an open structure. The RuvB hexamer acts as an ATP-dependent pump, pulling dsDNA into and through the RuvAB complex. RuvB forms 2 homohexamers on either side of HJ DNA bound by 1 or 2 RuvA tetramers; 4 subunits per hexamer contact DNA at a time. Coordinated motions by a converter formed by DNA-disengaged RuvB subunits stimulates ATP hydrolysis and nucleotide exchange. Immobilization of the converter enables RuvB to convert the ATP-contained energy into a lever motion, pulling 2 nucleotides of DNA out of the RuvA tetramer per ATP hydrolyzed, thus driving DNA branch migration. The RuvB motors rotate together with the DNA substrate, which together with the progressing nucleotide cycle form the mechanistic basis for DNA recombination by continuous HJ branch migration. Branch migration allows RuvC to scan DNA until it finds its consensus sequence, where it cleaves and resolves cruciform DNA. The chain is Holliday junction branch migration complex subunit RuvB from Burkholderia thailandensis (strain ATCC 700388 / DSM 13276 / CCUG 48851 / CIP 106301 / E264).